Here is a 139-residue protein sequence, read N- to C-terminus: Small ribosomal subunit protein bS16 (139 aa).

The interval 84–139 (KGEPAPAPLLQPAEKAARPSFEAIGGEDEGKGEAITQKKKADKRDEAAAESSASEA) is disordered.

Belongs to the bacterial ribosomal protein bS16 family.

The protein is Small ribosomal subunit protein bS16 of Streptomyces lividans.